Reading from the N-terminus, the 223-residue chain is Pre-protein VI (223 aa).

Positions 1–28 are excised as a propeptide; it reads MDYAALSPHLGGWALRDHHIGDSSLRGG. The interval 29–53 is amphipathic alpha-helix essential for membrane lytic activity; that stretch reads AINWGNLGSRITSALNSTGRWLYNT. The involved in endosomal membrane lysis stretch occupies residues 31–52; it reads NWGNLGSRITSALNSTGRWLYN. The interval 47–73 is interaction with hexon protein; it reads GRWLYNTGNRFVHSNTFNQIKQGIQDS. The Nuclear export signal signature appears at 66-75; sequence IKQGIQDSGV. Disordered stretches follow at residues 136–155 and 166–203; these read EPPA…PTTR and PPVT…GQWR. Residues 138-151 are compositionally biased toward pro residues; it reads PAAPAAPAPAPPLV. The span at 166 to 182 shows a compositional bias: low complexity; it reads PPVTSSAPAVPVDVPTT. A compositionally biased stretch (basic residues) spans 189–198; the sequence is PPKRRRKRAR. Residues 204 to 215 carry the Nuclear export signal motif; sequence ARLDSLSGTGVA. Positions 206-212 are interaction with hexon protein; it reads LDSLSGT. The interval 213–223 is binds to importin alpha/beta, involved in hexon nuclear import; sequence GVATATRRMCY.

Belongs to the adenoviridae protein VI family. Interacts with hexon protein; this interaction allows nuclear import of hexon trimers and possibly pre-capsid assembly. Interacts (via C-terminal NLS) with importin alpha/beta. As to quaternary structure, interacts (via PPxY motif) with host NEDD4 ubiquitine ligase; this interaction might play a role in virus intracellular transport during entry. Part of a complex composed of the core-capsid bridging protein, the endosome lysis protein VI and the hexon-linking protein VIII; these interactions bridge the virus core to the capsid. Interacts with peripentonal hexons; this interaction stabilizes the capsid by gluing two peripentonal hexons together and joining them with an adjacent group-of-nine hexon. In terms of assembly, heterodimer with the viral protease; disulfide-linked. Interacts with the viral protease. Post-translationally, ubiquitinated by Nedd4 following partial capsid disassembly; which might play a role in intracellular virus movement during entry. Contains the major nuclear import and export signals. Proteolytically removed during virion maturation. The processing of the C-terminus turns the precursor into a mature viral structural protein and abrogates its ability to promote hexon import and act as a potential chaperone protein.

Its subcellular location is the host nucleus. It is found in the host cytoplasm. The protein localises to the virion. In terms of biological role, during virus assembly, promotes hexon trimers nuclear import through nuclear pore complexes via an importin alpha/beta-dependent mechanism. By analogy to herpesviruses capsid assembly, might act as a chaperone to promote the formation of the icosahedral capsid. Its function is as follows. Structural component of the virion that provides increased stability to the particle shell through its interaction with the core-capsid bridging protein and the hexon-linking protein VIII. Fibers shedding during virus entry into host cell allows the endosome lysis protein to be exposed as a membrane-lytic peptide. Exhibits pH-independent membrane fragmentation activity and probably mediates viral rapid escape from host endosome via organellar membrane lysis. It is not clear if it then remains partially associated with the capsid and involved in the intracellular microtubule-dependent transport of capsid to the nucleus, or if it is lost during endosomal penetration. Cofactor that activates the viral protease. Binds to viral protease in a 1:1 ratio. This Fowl adenovirus A serotype 1 (strain CELO / Phelps) (FAdV-1) protein is Pre-protein VI.